A 331-amino-acid polypeptide reads, in one-letter code: Glyceraldehyde-3-phosphate dehydrogenase, cytosolic (331 aa).

Residues 11 to 12 (RI), D33, and R77 each bind NAD(+). Residues 148–150 (SCT), T179, 208–209 (TG), and R231 contribute to the D-glyceraldehyde 3-phosphate site. C149 (nucleophile) is an active-site residue. N313 lines the NAD(+) pocket.

This sequence belongs to the glyceraldehyde-3-phosphate dehydrogenase family. In terms of assembly, homotetramer.

The protein localises to the cytoplasm. The catalysed reaction is D-glyceraldehyde 3-phosphate + phosphate + NAD(+) = (2R)-3-phospho-glyceroyl phosphate + NADH + H(+). It functions in the pathway carbohydrate degradation; glycolysis; pyruvate from D-glyceraldehyde 3-phosphate: step 1/5. The protein is Glyceraldehyde-3-phosphate dehydrogenase, cytosolic (GAPC) of Leishmania mexicana.